Consider the following 719-residue polypeptide: Translation factor guf1, mitochondrial (719 aa).

The transit peptide at 1–75 directs the protein to the mitochondrion; it reads MRGALCRPDV…TRCFSALRSL (75 aa). The 183-residue stretch at 119–301 folds into the tr-type G domain; that stretch reads ERYRNFCIVA…AVISNVPAPV (183 aa). GTP is bound by residues 128 to 135, 194 to 198, and 248 to 251; these read AHIDHGKS, DTPGH, and NKID.

Belongs to the TRAFAC class translation factor GTPase superfamily. Classic translation factor GTPase family. LepA subfamily.

The protein localises to the mitochondrion inner membrane. It carries out the reaction GTP + H2O = GDP + phosphate + H(+). Promotes mitochondrial protein synthesis. May act as a fidelity factor of the translation reaction, by catalyzing a one-codon backward translocation of tRNAs on improperly translocated ribosomes. Binds to mitochondrial ribosomes in a GTP-dependent manner. The chain is Translation factor guf1, mitochondrial (guf1) from Neurospora crassa (strain ATCC 24698 / 74-OR23-1A / CBS 708.71 / DSM 1257 / FGSC 987).